A 402-amino-acid chain; its full sequence is Multidrug resistance protein MdtH (402 aa).

The Cytoplasmic portion of the chain corresponds to 1-12 (MSRVSQARNLGK). The helical transmembrane segment at 13-33 (YFLLIDNMLVVLGFFVVFPLI) threads the bilayer. At 34-98 (SIRFVDQMGW…GFATMGIAHE (65 aa)) the chain is on the periplasmic side. Residues 99-116 (PWLLWFSCLLSGLGGTLF) traverse the membrane as a helical segment. The Cytoplasmic segment spans residues 117-138 (DPPRSALVVKLIRPQQRGRFFS). The chain crosses the membrane as a helical span at residues 139-159 (LLMMQDSAGAVIGALLGSWLL). Residues 160–164 (QYDFR) are Periplasmic-facing. A helical membrane pass occupies residues 165–185 (LVCATGAVLFVLCAAFNAWLL). Residues 186 to 213 (PAWKLSTVRTPVREGMTRVMRDKRFVTY) are Cytoplasmic-facing. Residues 214–234 (VLTLAGYYMLAVQVMLMLPIM) form a helical membrane-spanning segment. Over 235–243 (VNDVAGAPS) the chain is Periplasmic. A helical membrane pass occupies residues 244–264 (AVKWMYAIEACLSLTLLYPIA). The Cytoplasmic portion of the chain corresponds to 265-276 (RWSEKHFRLEHR). A helical membrane pass occupies residues 277 to 297 (LMAGLLIMSLSMMPVGMVSGL). Residues 298-299 (QQ) lie on the Periplasmic side of the membrane. Residues 300–320 (LFNLICLFYIGSIIAEPARET) traverse the membrane as a helical segment. Residues 321 to 339 (LSASLADARARGSYMGFSR) lie on the Cytoplasmic side of the membrane. Residues 340 to 360 (LGLAIGGAIGYIGGGWLFDLG) form a helical membrane-spanning segment. The Periplasmic segment spans residues 361 to 367 (KSAHQPE). A helical membrane pass occupies residues 368–388 (LPWMMLGIIGIFTFLALGWQF). At 389 to 402 (SQKRAARRLLERDA) the chain is on the cytoplasmic side.

Belongs to the major facilitator superfamily. DHA1 family. MdtH (TC 2.A.1.2.21) subfamily.

The protein resides in the cell inner membrane. In terms of biological role, confers resistance to norfloxacin and enoxacin. This is Multidrug resistance protein MdtH from Escherichia coli O9:H4 (strain HS).